A 476-amino-acid chain; its full sequence is Bifunctional protein GlmU (476 aa).

Residues M1–R232 form a pyrophosphorylase region. UDP-N-acetyl-alpha-D-glucosamine contacts are provided by residues L9 to G12, K23, Q75, and G80 to T81. D105 lines the Mg(2+) pocket. Residues G142, E157, N172, and N230 each contribute to the UDP-N-acetyl-alpha-D-glucosamine site. N230 is a Mg(2+) binding site. The interval A233–D253 is linker. The interval G254–Q476 is N-acetyltransferase. R353 and K371 together coordinate UDP-N-acetyl-alpha-D-glucosamine. The active-site Proton acceptor is the H383. UDP-N-acetyl-alpha-D-glucosamine contacts are provided by Y386 and N397. Acetyl-CoA is bound by residues N406–Y407, S425, A443, and R460.

This sequence in the N-terminal section; belongs to the N-acetylglucosamine-1-phosphate uridyltransferase family. It in the C-terminal section; belongs to the transferase hexapeptide repeat family. In terms of assembly, homotrimer. The cofactor is Mg(2+).

The protein localises to the cytoplasm. It carries out the reaction alpha-D-glucosamine 1-phosphate + acetyl-CoA = N-acetyl-alpha-D-glucosamine 1-phosphate + CoA + H(+). The enzyme catalyses N-acetyl-alpha-D-glucosamine 1-phosphate + UTP + H(+) = UDP-N-acetyl-alpha-D-glucosamine + diphosphate. It participates in nucleotide-sugar biosynthesis; UDP-N-acetyl-alpha-D-glucosamine biosynthesis; N-acetyl-alpha-D-glucosamine 1-phosphate from alpha-D-glucosamine 6-phosphate (route II): step 2/2. Its pathway is nucleotide-sugar biosynthesis; UDP-N-acetyl-alpha-D-glucosamine biosynthesis; UDP-N-acetyl-alpha-D-glucosamine from N-acetyl-alpha-D-glucosamine 1-phosphate: step 1/1. It functions in the pathway bacterial outer membrane biogenesis; LPS lipid A biosynthesis. Catalyzes the last two sequential reactions in the de novo biosynthetic pathway for UDP-N-acetylglucosamine (UDP-GlcNAc). The C-terminal domain catalyzes the transfer of acetyl group from acetyl coenzyme A to glucosamine-1-phosphate (GlcN-1-P) to produce N-acetylglucosamine-1-phosphate (GlcNAc-1-P), which is converted into UDP-GlcNAc by the transfer of uridine 5-monophosphate (from uridine 5-triphosphate), a reaction catalyzed by the N-terminal domain. The protein is Bifunctional protein GlmU of Geobacter metallireducens (strain ATCC 53774 / DSM 7210 / GS-15).